Here is a 115-residue protein sequence, read N- to C-terminus: Vespryn (115 aa).

The N-terminal stretch at 1-15 (MTWLLLCLLAQYENG) is a signal peptide. One can recognise a B30.2/SPRY domain in the interval 22–115 (SSSAKPYKTS…VKRKDHLRLT (94 aa)).

Belongs to the ohanin/vespryn family. In terms of tissue distribution, expressed by the venom gland.

It is found in the secreted. Its function is as follows. Neurotoxin that produces dose-dependent hypolocomotion and hyperalgesia in mice. May directly act on the central nervous system, as it is 6500-fold more potent when administered intracerebroventricularly than intraperitoneal. The protein is Vespryn of Pogona barbata (Bearded dragon).